Reading from the N-terminus, the 476-residue chain is GTPase Der (476 aa).

2 consecutive EngA-type G domains span residues 3–167 (FTVA…GEER) and 205–380 (LRVA…KVWN). GTP contacts are provided by residues 9–16 (GRPNVGKS), 56–60 (DTAGL), 119–122 (NKSE), 211–218 (GRPNAGKS), 258–262 (DTAGM), and 323–326 (NKWD). In terms of domain architecture, KH-like spans 381 to 465 (RRISTARLNR…PIRVHFRASE (85 aa)).

It belongs to the TRAFAC class TrmE-Era-EngA-EngB-Septin-like GTPase superfamily. EngA (Der) GTPase family. Associates with the 50S ribosomal subunit.

GTPase that plays an essential role in the late steps of ribosome biogenesis. This Rhizobium meliloti (strain 1021) (Ensifer meliloti) protein is GTPase Der.